The sequence spans 374 residues: Muconate cycloisomerase 1 (374 aa).

Belongs to the cycloisomerase 2 family. As to quaternary structure, homotetramer.

The catalysed reaction is (S)-muconolactone = cis,cis-muconate + H(+). It participates in aromatic compound metabolism; beta-ketoadipate pathway; 5-oxo-4,5-dihydro-2-furylacetate from catechol: step 2/3. Functionally, catalyzes a syn cycloisomerization. The polypeptide is Muconate cycloisomerase 1 (Cutaneotrichosporon cutaneum (Yeast)).